The following is a 678-amino-acid chain: DNA ligase (678 aa).

Residues 47–51 (DSDYD), 96–97 (SL), and glutamate 122 each bind NAD(+). The active-site N6-AMP-lysine intermediate is lysine 124. 4 residues coordinate NAD(+): arginine 145, glutamate 182, lysine 300, and lysine 324. The Zn(2+) site is built by cysteine 418, cysteine 421, cysteine 436, and cysteine 442. The 77-residue stretch at 602 to 678 (AHNESFTNKT…IFEEDLQNLL (77 aa)) folds into the BRCT domain.

This sequence belongs to the NAD-dependent DNA ligase family. LigA subfamily. It depends on Mg(2+) as a cofactor. Mn(2+) is required as a cofactor.

The enzyme catalyses NAD(+) + (deoxyribonucleotide)n-3'-hydroxyl + 5'-phospho-(deoxyribonucleotide)m = (deoxyribonucleotide)n+m + AMP + beta-nicotinamide D-nucleotide.. Functionally, DNA ligase that catalyzes the formation of phosphodiester linkages between 5'-phosphoryl and 3'-hydroxyl groups in double-stranded DNA using NAD as a coenzyme and as the energy source for the reaction. It is essential for DNA replication and repair of damaged DNA. This is DNA ligase from Francisella philomiragia subsp. philomiragia (strain ATCC 25017 / CCUG 19701 / FSC 153 / O#319-036).